We begin with the raw amino-acid sequence, 291 residues long: Tryptophan 2,3-dioxygenase (291 aa).

Substrate contacts are provided by residues 51-55 (FIIQH), Tyr-113, and Arg-117. His-240 is a heme binding site. A substrate-binding site is contributed by Thr-254.

The protein belongs to the tryptophan 2,3-dioxygenase family. As to quaternary structure, homotetramer. The cofactor is heme.

The enzyme catalyses L-tryptophan + O2 = N-formyl-L-kynurenine. The protein operates within amino-acid degradation; L-tryptophan degradation via kynurenine pathway; L-kynurenine from L-tryptophan: step 1/2. Functionally, heme-dependent dioxygenase that catalyzes the oxidative cleavage of the L-tryptophan (L-Trp) pyrrole ring and converts L-tryptophan to N-formyl-L-kynurenine. Catalyzes the oxidative cleavage of the indole moiety. This is Tryptophan 2,3-dioxygenase from Myxococcus xanthus (strain DK1622).